Consider the following 464-residue polypeptide: Serine/threonine-protein kinase 38-like (464 aa).

Ala-2 is subject to N-acetylalanine. Residues Lys-63–Asp-88 form an S100B binding region. The residue at position 75 (Thr-75) is a Phosphothreonine. The Protein kinase domain occupies Phe-90–Phe-383. ATP is bound by residues Ile-96–Val-104 and Lys-119. Asp-213 (proton acceptor) is an active-site residue. Ser-282 is modified (phosphoserine; by autocatalysis). One can recognise an AGC-kinase C-terminal domain in the interval Glu-384–Gly-453. Thr-442 carries the phosphothreonine; by STK24/MST3 modification.

It belongs to the protein kinase superfamily. AGC Ser/Thr protein kinase family. In terms of assembly, homodimeric S100B binds two molecules of STK38L. Interacts with MICAL1; leading to inhibit the protein kinase activity by antagonizing activation by MST1/STK4. Interacts with MOB1 and MOB2. The cofactor is Mg(2+). As to expression, ubiquitously expressed with highest levels observed in the thymus.

Its subcellular location is the cytoplasm. The protein resides in the cytoskeleton. It localises to the membrane. It carries out the reaction L-seryl-[protein] + ATP = O-phospho-L-seryl-[protein] + ADP + H(+). The catalysed reaction is L-threonyl-[protein] + ATP = O-phospho-L-threonyl-[protein] + ADP + H(+). Activated by binding of S100B which releases autoinhibitory N-lobe interactions, enabling ATP to bind and the autophosphorylation of Ser-282. Thr-442 then undergoes calcium-dependent phosphorylation by STK24/MST3. Interactions between phosphorylated Thr-442 and the N-lobe promote additional structural changes that complete the activation of the kinase. Autoinhibition is also released by the binding of MOB1/MOBKL1A and MOB2/HCCA2 to the N-terminal of STK38L. Involved in the regulation of structural processes in differentiating and mature neuronal cells. The protein is Serine/threonine-protein kinase 38-like of Homo sapiens (Human).